A 185-amino-acid polypeptide reads, in one-letter code: Shikimate kinase (185 aa).

ATP is bound at residue 12–17 (GSGKTT). A Mg(2+)-binding site is contributed by Thr-16. Substrate-binding residues include Asp-34, Arg-58, and Gly-79. Arg-116 is an ATP binding site. Residue Arg-135 participates in substrate binding.

This sequence belongs to the shikimate kinase family. In terms of assembly, monomer. The cofactor is Mg(2+).

Its subcellular location is the cytoplasm. It catalyses the reaction shikimate + ATP = 3-phosphoshikimate + ADP + H(+). Its pathway is metabolic intermediate biosynthesis; chorismate biosynthesis; chorismate from D-erythrose 4-phosphate and phosphoenolpyruvate: step 5/7. Functionally, catalyzes the specific phosphorylation of the 3-hydroxyl group of shikimic acid using ATP as a cosubstrate. The polypeptide is Shikimate kinase (Corynebacterium jeikeium (strain K411)).